Consider the following 88-residue polypeptide: Large ribosomal subunit protein eL34 (88 aa).

This sequence belongs to the eukaryotic ribosomal protein eL34 family.

The sequence is that of Large ribosomal subunit protein eL34 from Methanobrevibacter smithii (strain ATCC 35061 / DSM 861 / OCM 144 / PS).